Consider the following 240-residue polypeptide: Phosphoribosylaminoimidazole-succinocarboxamide synthase (240 aa).

The protein belongs to the SAICAR synthetase family.

It carries out the reaction 5-amino-1-(5-phospho-D-ribosyl)imidazole-4-carboxylate + L-aspartate + ATP = (2S)-2-[5-amino-1-(5-phospho-beta-D-ribosyl)imidazole-4-carboxamido]succinate + ADP + phosphate + 2 H(+). The protein operates within purine metabolism; IMP biosynthesis via de novo pathway; 5-amino-1-(5-phospho-D-ribosyl)imidazole-4-carboxamide from 5-amino-1-(5-phospho-D-ribosyl)imidazole-4-carboxylate: step 1/2. The chain is Phosphoribosylaminoimidazole-succinocarboxamide synthase from Wolbachia sp. subsp. Brugia malayi (strain TRS).